The following is a 485-amino-acid chain: Probable serine/threonine-protein kinase nek1 (485 aa).

Residues 12–283 (YLIKSQIGSG…TQQILEQVFI (272 aa)) enclose the Protein kinase domain. ATP is bound by residues 18–26 (IGSGSYGNT) and Lys-41. Asp-136 acts as the Proton acceptor in catalysis. Positions 354–365 (KNQQQQSPQKLE) are enriched in polar residues. The disordered stretch occupies residues 354–419 (KNQQQQSPQK…NNDKNNNINN (66 aa)). Over residues 366–419 (NNNNNNNDNNNNNNNNNNNNNNNNNNNNNNNNNNNNNNNNNNNNNNDKNNNINN) the composition is skewed to low complexity.

It belongs to the protein kinase superfamily. NEK Ser/Thr protein kinase family. NIMA subfamily.

It catalyses the reaction L-seryl-[protein] + ATP = O-phospho-L-seryl-[protein] + ADP + H(+). The catalysed reaction is L-threonyl-[protein] + ATP = O-phospho-L-threonyl-[protein] + ADP + H(+). The chain is Probable serine/threonine-protein kinase nek1 (nek1) from Dictyostelium discoideum (Social amoeba).